Reading from the N-terminus, the 174-residue chain is Crossover junction endodeoxyribonuclease RuvC (174 aa).

Residues D8, E67, and D139 contribute to the active site. Mg(2+)-binding residues include D8, E67, and D139.

The protein belongs to the RuvC family. As to quaternary structure, homodimer which binds Holliday junction (HJ) DNA. The HJ becomes 2-fold symmetrical on binding to RuvC with unstacked arms; it has a different conformation from HJ DNA in complex with RuvA. In the full resolvosome a probable DNA-RuvA(4)-RuvB(12)-RuvC(2) complex forms which resolves the HJ. The cofactor is Mg(2+).

The protein localises to the cytoplasm. The catalysed reaction is Endonucleolytic cleavage at a junction such as a reciprocal single-stranded crossover between two homologous DNA duplexes (Holliday junction).. Its function is as follows. The RuvA-RuvB-RuvC complex processes Holliday junction (HJ) DNA during genetic recombination and DNA repair. Endonuclease that resolves HJ intermediates. Cleaves cruciform DNA by making single-stranded nicks across the HJ at symmetrical positions within the homologous arms, yielding a 5'-phosphate and a 3'-hydroxyl group; requires a central core of homology in the junction. The consensus cleavage sequence is 5'-(A/T)TT(C/G)-3'. Cleavage occurs on the 3'-side of the TT dinucleotide at the point of strand exchange. HJ branch migration catalyzed by RuvA-RuvB allows RuvC to scan DNA until it finds its consensus sequence, where it cleaves and resolves the cruciform DNA. The polypeptide is Crossover junction endodeoxyribonuclease RuvC (Pseudomonas putida (strain W619)).